The primary structure comprises 472 residues: E1B 55 kDa protein (472 aa).

A disordered region spans residues 1 to 90 (MERPNPSVGG…GQRGEKRKLE (90 aa)). Over residues 32–44 (RLLAGAASARSGS) the composition is skewed to low complexity. Residues 45–57 (SAGGGGGGGGGGE) show a composition bias toward gly residues. A phosphoserine mark is found at Ser468 and Ser469.

It belongs to the adenoviridae E1B 55 kDa protein family. Interacts with host PML-4 and PML-5; this interaction promotes efficient subnuclear targeting of E1B-55K to PML nuclear bodies. Interacts with E4-ORF3 protein. Interacts with E4-ORF6 protein.

It is found in the host nucleus. The protein resides in the host cytoplasm. Functionally, plays a major role to prevent cellular inhibition of viral genome replication. Assembles an SCF-like E3 ubiquitin ligase complex based on the cellular proteins ELOB, ELOC, CUL5 and RBX1, in cooperation with viral E4orf6. This viral RING-type ligase ubiquitinates cellular substrates and targets them to proteasomal degradation: TP53/p53, LIG4, MRE11-RAD50-NBS1 (MRN) complex, ITGA3, DAXX and BLM. E1B-55K probably acts as the substrate-specific adapter of the SCF-like E3 ubiquitin ligase complex. Degradation of host TP53/p53 activity is essential for preventing E1A-induced TP53 accumulation that would otherwise lead to cell apoptosis and growth arrest. E1B-55K also inactivates TP53 transcription-factor activity by binding its transactivation domain. E1B-55K also functions as a SUMO1 E3 ligase for TP53 which causes the latter to be sequestered in promyelocytic leukemia (PML) nuclear bodies thereby contributing to maximal inhibition of TP53 function. This chain is E1B 55 kDa protein, found in Homo sapiens (Human).